Consider the following 122-residue polypeptide: Large ribosomal subunit protein uL14c (122 aa).

Belongs to the universal ribosomal protein uL14 family. As to quaternary structure, part of the 50S ribosomal subunit.

The protein localises to the plastid. It is found in the chloroplast. In terms of biological role, binds to 23S rRNA. The protein is Large ribosomal subunit protein uL14c of Pyropia yezoensis (Susabi-nori).